The primary structure comprises 39 residues: Photosystem II reaction center protein J (39 aa).

A helical membrane pass occupies residues Leu9–Tyr29.

Belongs to the PsbJ family. PSII is composed of 1 copy each of membrane proteins PsbA, PsbB, PsbC, PsbD, PsbE, PsbF, PsbH, PsbI, PsbJ, PsbK, PsbL, PsbM, PsbT, PsbX, PsbY, PsbZ, Psb30/Ycf12, at least 3 peripheral proteins of the oxygen-evolving complex and a large number of cofactors. It forms dimeric complexes.

The protein localises to the plastid. It localises to the chloroplast thylakoid membrane. Its function is as follows. One of the components of the core complex of photosystem II (PSII). PSII is a light-driven water:plastoquinone oxidoreductase that uses light energy to abstract electrons from H(2)O, generating O(2) and a proton gradient subsequently used for ATP formation. It consists of a core antenna complex that captures photons, and an electron transfer chain that converts photonic excitation into a charge separation. This is Photosystem II reaction center protein J from Pyropia yezoensis (Susabi-nori).